Reading from the N-terminus, the 599-residue chain is Kelch-like protein 24a (599 aa).

Residues 65–132 enclose the BTB domain; sequence TDVIISVQGR…VYTGRACITT (68 aa). Residues 167-269 enclose the BACK domain; that stretch reads CLGIQRFADA…HPNYFVQTVE (103 aa). Kelch repeat units follow at residues 313 to 362, 364 to 406, 407 to 453, 455 to 501, 503 to 543, and 545 to 591; these read VIVV…ALRN, IILS…VLLG, KVYA…SCAG, LFVI…SLNH, IYVC…VCNG, and IYIL…TVHR.

In terms of assembly, forms homodimers. Component of the BCR(KLHL24) E3 ubiquitin ligase complex.

The protein localises to the perikaryon. The protein resides in the cell projection. It localises to the axon. Its subcellular location is the cytoplasm. It is found in the cell junction. The protein localises to the desmosome. The protein resides in the adherens junction. Its function is as follows. Necessary to maintain the balance between intermediate filament stability and degradation, a process that is essential for skin integrity. Reduces kainate receptor-mediated currents in brain neurons, most probably by modulating channel properties. It is required for proper heart development. This Danio rerio (Zebrafish) protein is Kelch-like protein 24a.